The chain runs to 548 residues: CTP synthase (548 aa).

Positions 1-270 are amidoligase domain; that stretch reads MTKYVFVTGG…DNIVCEALGL (270 aa). S13 is a binding site for CTP. S13 is a UTP binding site. ATP contacts are provided by residues 14 to 19 and D71; that span reads SLGKGI. D71 and E144 together coordinate Mg(2+). Residues 151-153, 191-196, and K227 contribute to the CTP site; these read DIE and KTKPTQ. UTP-binding positions include 191 to 196 and K227; that span reads KTKPTQ. Residues 295 to 545 enclose the Glutamine amidotransferase type-1 domain; it reads TIGMVGKYVD…IEAAIANHAR (251 aa). G356 contributes to the L-glutamine binding site. C383 functions as the Nucleophile; for glutamine hydrolysis in the catalytic mechanism. L-glutamine contacts are provided by residues 384–387, E407, and R473; that span reads LGMQ. Catalysis depends on residues H518 and E520.

The protein belongs to the CTP synthase family. In terms of assembly, homotetramer.

It catalyses the reaction UTP + L-glutamine + ATP + H2O = CTP + L-glutamate + ADP + phosphate + 2 H(+). It carries out the reaction L-glutamine + H2O = L-glutamate + NH4(+). The enzyme catalyses UTP + NH4(+) + ATP = CTP + ADP + phosphate + 2 H(+). It functions in the pathway pyrimidine metabolism; CTP biosynthesis via de novo pathway; CTP from UDP: step 2/2. With respect to regulation, allosterically activated by GTP, when glutamine is the substrate; GTP has no effect on the reaction when ammonia is the substrate. The allosteric effector GTP functions by stabilizing the protein conformation that binds the tetrahedral intermediate(s) formed during glutamine hydrolysis. Inhibited by the product CTP, via allosteric rather than competitive inhibition. Its function is as follows. Catalyzes the ATP-dependent amination of UTP to CTP with either L-glutamine or ammonia as the source of nitrogen. Regulates intracellular CTP levels through interactions with the four ribonucleotide triphosphates. The chain is CTP synthase from Bordetella petrii (strain ATCC BAA-461 / DSM 12804 / CCUG 43448).